The sequence spans 472 residues: Eukaryotic translation initiation factor 2 subunit 3, Y-linked (472 aa).

Ala2 carries the post-translational modification N-acetylalanine. Ser16 carries the post-translational modification Phosphoserine. The tr-type G domain occupies Gln39–Leu247. Residues Gly48–Ser55 are G1. Ala51 to Thr56 serves as a coordination point for GTP. The segment at Asn76–Lys80 is G2. Residues Asp134–Gly137 are G3. GTP-binding positions include Asn190–Asp193 and Ser225–Gln227. The interval Asn190–Asp193 is G4. The segment at Ser225–Gln227 is G5.

Belongs to the TRAFAC class translation factor GTPase superfamily. Classic translation factor GTPase family. EIF2G subfamily. As to quaternary structure, eIF2 is a heterotrimer composed of an alpha (EIF2S1), a beta (EIF2S2) and a gamma (Eif2s3x and Eif2s3y) chain. eIF2 is member of the 43S pre-initiation complex (43S PIC). As to expression, widely expressed in males.

The catalysed reaction is GTP + H2O = GDP + phosphate + H(+). Its function is as follows. Member of the eIF2 complex that functions in the early steps of protein synthesis by forming a ternary complex with GTP and initiator tRNA. This complex binds to a 40S ribosomal subunit, followed by mRNA binding to form the 43S pre-initiation complex (43S PIC). Junction of the 60S ribosomal subunit to form the 80S initiation complex is preceded by hydrolysis of the GTP bound to eIF2 and release of an eIF2-GDP binary complex. In order for eIF2 to recycle and catalyze another round of initiation, the GDP bound to eIF2 must exchange with GTP by way of a reaction catalyzed by eIF-2B. Along with its paralog on chromosome X, may contribute to spermatogenesis up to the round spermatid stage. This chain is Eukaryotic translation initiation factor 2 subunit 3, Y-linked (Eif2s3y), found in Rattus norvegicus (Rat).